We begin with the raw amino-acid sequence, 448 residues long: Death-associated protein kinase 3 (448 aa).

The region spanning 13 to 275 (YEMGEELGSG…IAQSLEHSWI (263 aa)) is the Protein kinase domain. Residues 19–27 (LGSGQFAIV) and Lys42 contribute to the ATP site. The active-site Proton acceptor is Asp139. Residues 161–204 (DFGIAHRIEAGSEFKNIFGTPEFVAPEIVNYEPLGLEADMWSIG) form an activation segment region. Thr180 and Thr225 each carry phosphothreonine. Residue Thr265 is modified to Phosphothreonine; by autocatalysis. Thr265 is subject to Phosphothreonine; by ROCK1. Position 304 is a phosphoserine; by DAPK1 (Ser304). A Phosphoserine; by autocatalysis and DAPK1 modification is found at Ser306. 3 positions are modified to phosphoserine; by DAPK1: Ser307, Ser313, and Ser321. Positions 390–448 (AQEEARAALLGAGGLKRRLCRLENRYDALAAQVAAEVQFVRDLVRALEQERLQAECGVR) are interaction with CDC5L. Positions 418–448 (LAAQVAAEVQFVRDLVRALEQERLQAECGVR) are required for interaction with ATF4 but not with PAWR. The segment at 422–436 (VAAEVQFVRDLVRAL) is leucine-zipper.

The protein belongs to the protein kinase superfamily. CAMK Ser/Thr protein kinase family. DAP kinase subfamily. As to quaternary structure, homooligomer in its kinase-active form (homotrimers and homodimers are reported); monomeric in its kinase-inactive form. Homodimerization is required for activation segment autophosphorylation. Interacts with DAXX, ATF4, NLK, TCF7L2, UBE2D1, UBE2D2, UBE2D3 and CDC5L. Interacts with PAWR; also demonstrated in aorta smooth muscle cells indicative for the cytoskeletal targeting function of PAWR. Interacts with AR; enhanced by AATF. Interacts with LUZP1; the interaction is likely to occur throughout the cell cycle and reduces the LUZP1-mediated suppression of MYL9 phosphorylation. Requires Mg(2+) as cofactor. In terms of processing, ubiquitinated. Ubiquitination mediated by the UBE2D3 E3 ligase does not lead to proteasomal degradation, but influences promyelocytic leukemia protein nuclear bodies (PML-NBs) formation in the nucleus. The phosphorylation status is critical for kinase activity, oligomerization and intracellular localization. Phosphorylation at Thr-180, Thr-225 and Thr-265 is essential for activity. The phosphorylated form is localized in the cytoplasm and nuclear translocation or retention is maximal when it is not phosphorylated. Phosphorylation increases the trimeric form, and its dephosphorylation favors a kinase-inactive monomeric form. As to expression, ubiquitously expressed in all tissue types examined. High levels in brain, heart, lung and spleen, lower expression in kidney, liver, skeletal muscle and testis. Isoform 2 is expressed in the smooth muscle.

It localises to the nucleus. Its subcellular location is the PML body. The protein localises to the cytoplasm. The protein resides in the cytoskeleton. It is found in the microtubule organizing center. It localises to the chromosome. Its subcellular location is the centromere. The protein localises to the spindle. The protein resides in the midbody. It catalyses the reaction L-seryl-[protein] + ATP = O-phospho-L-seryl-[protein] + ADP + H(+). The catalysed reaction is L-threonyl-[protein] + ATP = O-phospho-L-threonyl-[protein] + ADP + H(+). Its activity is regulated as follows. A sequential activation is proposed: autophosphorylation at consensus sites is leading to dimerization of the catalytic domain and activation segment exchange (producing an active confirmation of both kinase modules in trans) followed by phosphorylation at Thr-180 in the activation segment and at other regulatory sites. Phosphorylation at Thr-180, Thr-225 and Thr-265 is essential for activity. Inhibited by pyridone 6 (K00225), a potent, ATP-competitive inhibitor. Phosphorylation at Thr-180, Thr-225 and Thr-265 is essential for activity. In terms of biological role, serine/threonine kinase which is involved in the regulation of apoptosis, autophagy, transcription, translation and actin cytoskeleton reorganization. Regulates both type I (caspase-dependent) apoptotic and type II (caspase-independent) autophagic cell deaths signal, depending on the cellular setting. Involved in formation of promyelocytic leukemia protein nuclear body (PML-NB). Involved in apoptosis involving PAWR which mediates cytoplasmic relocation; in vitro phosphorylates PAWR. Regulates myosin phosphorylation in both smooth muscle and non-muscle cells. In smooth muscle, regulates myosin either directly by phosphorylating MYL12B and MYL9 or through inhibition of smooth muscle myosin phosphatase (SMPP1M) via phosphorylation of PPP1R12A; the inhibition of SMPP1M functions to enhance muscle responsiveness to Ca(2+) and promote a contractile state. Phosphorylates MYL12B in non-muscle cells leading to reorganization of actin cytoskeleton such as in regulation of cell polarity and cell migration. Positively regulates canonical Wnt/beta-catenin signaling through interaction with NLK and TCF7L2; disrupts the NLK-TCF7L2 complex thereby influencing the phosphorylation of TCF7L2 by NLK. Phosphorylates RPL13A on 'Ser-77' upon interferon-gamma activation which is causing RPL13A release from the ribosome, RPL13A association with the GAIT complex and its subsequent involvement in transcript-selective translation inhibition. Phosphorylates STAT3 and enhances its transcriptional activity. Enhances transcription from AR-responsive promoters in a hormone- and kinase-dependent manner. Phosphorylates histone H3 on 'Thr-11' at centromeres during mitosis. The sequence is that of Death-associated protein kinase 3 (Dapk3) from Rattus norvegicus (Rat).